Here is a 264-residue protein sequence, read N- to C-terminus: Ribosomal RNA small subunit methyltransferase A (264 aa).

S-adenosyl-L-methionine contacts are provided by Asn-12, Leu-14, Gly-39, Glu-60, Asp-83, and Asn-103.

It belongs to the class I-like SAM-binding methyltransferase superfamily. rRNA adenine N(6)-methyltransferase family. RsmA subfamily.

It is found in the cytoplasm. It catalyses the reaction adenosine(1518)/adenosine(1519) in 16S rRNA + 4 S-adenosyl-L-methionine = N(6)-dimethyladenosine(1518)/N(6)-dimethyladenosine(1519) in 16S rRNA + 4 S-adenosyl-L-homocysteine + 4 H(+). Functionally, specifically dimethylates two adjacent adenosines (A1518 and A1519) in the loop of a conserved hairpin near the 3'-end of 16S rRNA in the 30S particle. May play a critical role in biogenesis of 30S subunits. The protein is Ribosomal RNA small subunit methyltransferase A of Syntrophotalea carbinolica (strain DSM 2380 / NBRC 103641 / GraBd1) (Pelobacter carbinolicus).